The primary structure comprises 206 residues: Small ribosomal subunit protein uS4 (206 aa).

The region spanning 96–156 (TRLDNVVYRM…EKSKTQARII (61 aa)) is the S4 RNA-binding domain.

Belongs to the universal ribosomal protein uS4 family. Part of the 30S ribosomal subunit. Contacts protein S5. The interaction surface between S4 and S5 is involved in control of translational fidelity.

Its function is as follows. One of the primary rRNA binding proteins, it binds directly to 16S rRNA where it nucleates assembly of the body of the 30S subunit. In terms of biological role, with S5 and S12 plays an important role in translational accuracy. The chain is Small ribosomal subunit protein uS4 from Colwellia psychrerythraea (strain 34H / ATCC BAA-681) (Vibrio psychroerythus).